The sequence spans 237 residues: Demethylmenaquinone methyltransferase (237 aa).

Residues threonine 62, aspartate 80, 102-103 (DA), and serine 119 each bind S-adenosyl-L-methionine.

The protein belongs to the class I-like SAM-binding methyltransferase superfamily. MenG/UbiE family.

It carries out the reaction a 2-demethylmenaquinol + S-adenosyl-L-methionine = a menaquinol + S-adenosyl-L-homocysteine + H(+). It functions in the pathway quinol/quinone metabolism; menaquinone biosynthesis; menaquinol from 1,4-dihydroxy-2-naphthoate: step 2/2. In terms of biological role, methyltransferase required for the conversion of demethylmenaquinol (DMKH2) to menaquinol (MKH2). In Renibacterium salmoninarum (strain ATCC 33209 / DSM 20767 / JCM 11484 / NBRC 15589 / NCIMB 2235), this protein is Demethylmenaquinone methyltransferase.